The primary structure comprises 482 residues: MKLKKIIGDVKYELICGDLNVEIDNLNYDSRKVNEKGLFFCIEGYTSDGHDFIDKAVEKGADVIVCTKVPKKLPNCTVVKVEDGRKAMAVMGANFYDNPSHKLKLIGITGTNGKTTSTYMMKSMLESSGYKVGLIGTIANYIGDKKIESHRTTPESLELQKLFSDMVHDKIDYCVMEVSSHSLYLDRVYGIVFEEGIFTNLTQDHLDFHKTFENYYKAKMILFKNSKRSIINIDDKYGERVFKDAGNDKITYGLTEKADLKAENLKMTSRGTEFDLCYRGLREHVKINIPGKYNVYNALGSVAACLNEGISIEKVKDGLNKLSSVPGRCEIVTHNTNLDFDVVLDYAHTPDGLEKVLKASREFTKGRLISVFGCGGDRDKTKRPIMGEIGSKLSDIAVITSDNPRSENPEEIIKDIVQGIKTDNYVIVENRKEAIKKAMLMAKKDDVIVLAGKGHENYQILGDKTIHFDEKEIVSEFIKELF.

Ser-30 provides a ligand contact to UDP-N-acetyl-alpha-D-muramoyl-L-alanyl-D-glutamate. An ATP-binding site is contributed by 110–116 (GTNGKTT). UDP-N-acetyl-alpha-D-muramoyl-L-alanyl-D-glutamate is bound by residues 152–153 (TT), Ser-179, and Arg-187. An N6-carboxylysine modification is found at Lys-219. Meso-2,6-diaminopimelate-binding positions include Arg-378, 402-405 (DNPR), Gly-452, and Glu-456. Residues 402-405 (DNPR) carry the Meso-diaminopimelate recognition motif motif.

It belongs to the MurCDEF family. MurE subfamily. It depends on Mg(2+) as a cofactor. Post-translationally, carboxylation is probably crucial for Mg(2+) binding and, consequently, for the gamma-phosphate positioning of ATP.

Its subcellular location is the cytoplasm. It catalyses the reaction UDP-N-acetyl-alpha-D-muramoyl-L-alanyl-D-glutamate + meso-2,6-diaminopimelate + ATP = UDP-N-acetyl-alpha-D-muramoyl-L-alanyl-gamma-D-glutamyl-meso-2,6-diaminopimelate + ADP + phosphate + H(+). Its pathway is cell wall biogenesis; peptidoglycan biosynthesis. Functionally, catalyzes the addition of meso-diaminopimelic acid to the nucleotide precursor UDP-N-acetylmuramoyl-L-alanyl-D-glutamate (UMAG) in the biosynthesis of bacterial cell-wall peptidoglycan. The polypeptide is UDP-N-acetylmuramoyl-L-alanyl-D-glutamate--2,6-diaminopimelate ligase 1 (Clostridium acetobutylicum (strain ATCC 824 / DSM 792 / JCM 1419 / IAM 19013 / LMG 5710 / NBRC 13948 / NRRL B-527 / VKM B-1787 / 2291 / W)).